A 213-amino-acid chain; its full sequence is Orotate phosphoribosyltransferase (213 aa).

Lys-26 is a binding site for 5-phospho-alpha-D-ribose 1-diphosphate. Residue 34–35 (FF) participates in orotate binding. 5-phospho-alpha-D-ribose 1-diphosphate-binding positions include 72–73 (YK), Arg-99, Lys-100, Lys-103, His-105, and 124–132 (DDVITAGTA). Positions 128 and 156 each coordinate orotate.

The protein belongs to the purine/pyrimidine phosphoribosyltransferase family. PyrE subfamily. As to quaternary structure, homodimer. Requires Mg(2+) as cofactor.

The enzyme catalyses orotidine 5'-phosphate + diphosphate = orotate + 5-phospho-alpha-D-ribose 1-diphosphate. The protein operates within pyrimidine metabolism; UMP biosynthesis via de novo pathway; UMP from orotate: step 1/2. Functionally, catalyzes the transfer of a ribosyl phosphate group from 5-phosphoribose 1-diphosphate to orotate, leading to the formation of orotidine monophosphate (OMP). The polypeptide is Orotate phosphoribosyltransferase (Salmonella agona (strain SL483)).